Here is a 417-residue protein sequence, read N- to C-terminus: Serine hydroxymethyltransferase (417 aa).

(6S)-5,6,7,8-tetrahydrofolate contacts are provided by residues Leu121 and 125-127 (GHL). Lys229 bears the N6-(pyridoxal phosphate)lysine mark. 355 to 357 (SPF) contacts (6S)-5,6,7,8-tetrahydrofolate.

Belongs to the SHMT family. In terms of assembly, homodimer. The cofactor is pyridoxal 5'-phosphate.

The protein resides in the cytoplasm. It catalyses the reaction (6R)-5,10-methylene-5,6,7,8-tetrahydrofolate + glycine + H2O = (6S)-5,6,7,8-tetrahydrofolate + L-serine. The protein operates within one-carbon metabolism; tetrahydrofolate interconversion. It participates in amino-acid biosynthesis; glycine biosynthesis; glycine from L-serine: step 1/1. Functionally, catalyzes the reversible interconversion of serine and glycine with tetrahydrofolate (THF) serving as the one-carbon carrier. This reaction serves as the major source of one-carbon groups required for the biosynthesis of purines, thymidylate, methionine, and other important biomolecules. Also exhibits THF-independent aldolase activity toward beta-hydroxyamino acids, producing glycine and aldehydes, via a retro-aldol mechanism. The sequence is that of Serine hydroxymethyltransferase from Xanthomonas campestris pv. campestris (strain 8004).